The primary structure comprises 756 residues: Probable chemoreceptor y4sI (756 aa).

A run of 2 helical transmembrane segments spans residues 26 to 46 and 330 to 350; these read VCVA…TSVA and LIKI…MAIL. 2 consecutive HAMP domains span residues 353-406 and 434-486; these read RSIS…ARVA and DEQA…ETIR. In terms of domain architecture, Methyl-accepting transducer spans 491–720; that stretch reads QAASMSSIVS…ESDAACRSLN (230 aa). The interval 736–756 is disordered; sequence GGGSSTRQPQSPPTQRYFMSR.

It belongs to the methyl-accepting chemotaxis (MCP) protein family.

The protein localises to the cell membrane. Functionally, chemotactic-signal transducers respond to changes in the concentration of attractants and repellents in the environment, transduce a signal from the outside to the inside of the cell, and facilitate sensory adaptation through the variation of the level of methylation. Attractants increase the level of methylation while repellents decrease the level of methylation. This chain is Probable chemoreceptor y4sI, found in Sinorhizobium fredii (strain NBRC 101917 / NGR234).